The sequence spans 233 residues: Small ribosomal subunit protein uS2c (233 aa).

The protein belongs to the universal ribosomal protein uS2 family.

The protein resides in the plastid. It is found in the chloroplast. This Galdieria sulphuraria (Red alga) protein is Small ribosomal subunit protein uS2c (rps2).